Consider the following 344-residue polypeptide: tRNA N6-adenosine threonylcarbamoyltransferase (344 aa).

Fe cation-binding residues include histidine 110 and histidine 114. Substrate-binding positions include 133–137, aspartate 166, glycine 179, and asparagine 278; that span reads VVSGA. Aspartate 303 lines the Fe cation pocket.

It belongs to the KAE1 / TsaD family. Fe(2+) serves as cofactor.

The protein resides in the cytoplasm. The catalysed reaction is L-threonylcarbamoyladenylate + adenosine(37) in tRNA = N(6)-L-threonylcarbamoyladenosine(37) in tRNA + AMP + H(+). Required for the formation of a threonylcarbamoyl group on adenosine at position 37 (t(6)A37) in tRNAs that read codons beginning with adenine. Is involved in the transfer of the threonylcarbamoyl moiety of threonylcarbamoyl-AMP (TC-AMP) to the N6 group of A37, together with TsaE and TsaB. TsaD likely plays a direct catalytic role in this reaction. The polypeptide is tRNA N6-adenosine threonylcarbamoyltransferase (Chlamydia pneumoniae (Chlamydophila pneumoniae)).